Consider the following 479-residue polypeptide: Ribosomal RNA small subunit methyltransferase F (479 aa).

S-adenosyl-L-methionine-binding positions include 125–131 (AAAPGSK), Glu-149, Asp-176, and Asp-194. The active-site Nucleophile is the Cys-247.

The protein belongs to the class I-like SAM-binding methyltransferase superfamily. RsmB/NOP family.

The protein localises to the cytoplasm. It catalyses the reaction cytidine(1407) in 16S rRNA + S-adenosyl-L-methionine = 5-methylcytidine(1407) in 16S rRNA + S-adenosyl-L-homocysteine + H(+). In terms of biological role, specifically methylates the cytosine at position 1407 (m5C1407) of 16S rRNA. The polypeptide is Ribosomal RNA small subunit methyltransferase F (Escherichia coli O7:K1 (strain IAI39 / ExPEC)).